Consider the following 423-residue polypeptide: UDP-N-acetylglucosamine 1-carboxyvinyltransferase 1 (423 aa).

23-24 contributes to the phosphoenolpyruvate binding site; that stretch reads KN. R96 contributes to the UDP-N-acetyl-alpha-D-glucosamine binding site. C120 serves as the catalytic Proton donor. Position 120 is a 2-(S-cysteinyl)pyruvic acid O-phosphothioketal (C120). UDP-N-acetyl-alpha-D-glucosamine is bound by residues D309 and V331.

This sequence belongs to the EPSP synthase family. MurA subfamily.

Its subcellular location is the cytoplasm. It carries out the reaction phosphoenolpyruvate + UDP-N-acetyl-alpha-D-glucosamine = UDP-N-acetyl-3-O-(1-carboxyvinyl)-alpha-D-glucosamine + phosphate. Its pathway is cell wall biogenesis; peptidoglycan biosynthesis. Its function is as follows. Cell wall formation. Adds enolpyruvyl to UDP-N-acetylglucosamine. This is UDP-N-acetylglucosamine 1-carboxyvinyltransferase 1 from Streptococcus pyogenes serotype M3 (strain ATCC BAA-595 / MGAS315).